We begin with the raw amino-acid sequence, 311 residues long: Aspartate carbamoyltransferase catalytic subunit (311 aa).

Residues arginine 55 and threonine 56 each contribute to the carbamoyl phosphate site. Residue lysine 83 coordinates L-aspartate. Residues arginine 105, histidine 133, and glutamine 136 each contribute to the carbamoyl phosphate site. Residues arginine 166 and arginine 220 each contribute to the L-aspartate site. 2 residues coordinate carbamoyl phosphate: glycine 261 and proline 262.

This sequence belongs to the aspartate/ornithine carbamoyltransferase superfamily. ATCase family. In terms of assembly, heterododecamer (2C3:3R2) of six catalytic PyrB chains organized as two trimers (C3), and six regulatory PyrI chains organized as three dimers (R2).

It catalyses the reaction carbamoyl phosphate + L-aspartate = N-carbamoyl-L-aspartate + phosphate + H(+). It participates in pyrimidine metabolism; UMP biosynthesis via de novo pathway; (S)-dihydroorotate from bicarbonate: step 2/3. Its function is as follows. Catalyzes the condensation of carbamoyl phosphate and aspartate to form carbamoyl aspartate and inorganic phosphate, the committed step in the de novo pyrimidine nucleotide biosynthesis pathway. This chain is Aspartate carbamoyltransferase catalytic subunit, found in Chlorobium chlorochromatii (strain CaD3).